Here is an 85-residue protein sequence, read N- to C-terminus: uncharacterized protein (85 aa).

This is an uncharacterized protein from Mycobacterium tuberculosis (strain CDC 1551 / Oshkosh).